The sequence spans 248 residues: tRNA uridine(34) hydroxylase (248 aa).

A Rhodanese domain is found at 128–222 (EGRPVVMLDT…YFEEVGGAHY (95 aa)). The active-site Cysteine persulfide intermediate is C182.

Belongs to the TrhO family.

It carries out the reaction uridine(34) in tRNA + AH2 + O2 = 5-hydroxyuridine(34) in tRNA + A + H2O. Its function is as follows. Catalyzes oxygen-dependent 5-hydroxyuridine (ho5U) modification at position 34 in tRNAs. The chain is tRNA uridine(34) hydroxylase from Thiobacillus denitrificans (strain ATCC 25259 / T1).